A 362-amino-acid chain; its full sequence is GTPase Obg (362 aa).

The 159-residue stretch at 1 to 159 folds into the Obg domain; that stretch reads MKFIDEARIE…RKLKLELKVL (159 aa). The interval 129-148 is disordered; that stretch reads HFKSSTNRAPRQKTNGKEGE. A compositionally biased stretch (polar residues) spans 130–141; the sequence is FKSSTNRAPRQK. Residues 160–334 form the OBG-type G domain; sequence ADVGLLGMPN…LCYALQDYLD (175 aa). GTP is bound by residues 166 to 173, 191 to 195, 213 to 216, 284 to 287, and 315 to 317; these read GMPNAGKS, FTTLH, DIPG, NKVD, and SAL. The Mg(2+) site is built by Ser-173 and Thr-193. The disordered stretch occupies residues 340–362; the sequence is RDDAEERAADPRYQDQAADKSPD.

This sequence belongs to the TRAFAC class OBG-HflX-like GTPase superfamily. OBG GTPase family. Monomer. Mg(2+) is required as a cofactor.

It localises to the cytoplasm. Functionally, an essential GTPase which binds GTP, GDP and possibly (p)ppGpp with moderate affinity, with high nucleotide exchange rates and a fairly low GTP hydrolysis rate. Plays a role in control of the cell cycle, stress response, ribosome biogenesis and in those bacteria that undergo differentiation, in morphogenesis control. The chain is GTPase Obg from Polynucleobacter asymbioticus (strain DSM 18221 / CIP 109841 / QLW-P1DMWA-1) (Polynucleobacter necessarius subsp. asymbioticus).